A 309-amino-acid polypeptide reads, in one-letter code: Homoserine O-succinyltransferase (309 aa).

Cysteine 142 (acyl-thioester intermediate) is an active-site residue. 2 residues coordinate substrate: lysine 163 and serine 192. Histidine 235 (proton acceptor) is an active-site residue. Glutamate 237 is an active-site residue. Arginine 249 lines the substrate pocket.

Belongs to the MetA family.

The protein resides in the cytoplasm. It catalyses the reaction L-homoserine + succinyl-CoA = O-succinyl-L-homoserine + CoA. It functions in the pathway amino-acid biosynthesis; L-methionine biosynthesis via de novo pathway; O-succinyl-L-homoserine from L-homoserine: step 1/1. Its function is as follows. Transfers a succinyl group from succinyl-CoA to L-homoserine, forming succinyl-L-homoserine. The polypeptide is Homoserine O-succinyltransferase (Proteus mirabilis (strain HI4320)).